Reading from the N-terminus, the 221-residue chain is Epididymal secretory glutathione peroxidase (221 aa).

Positions 1–21 (MVTELRVFYLVPLLLASYVQT) are cleaved as a signal peptide. Cys73 is an active-site residue.

This sequence belongs to the glutathione peroxidase family. In terms of tissue distribution, epididymis.

Its subcellular location is the secreted. It catalyses the reaction 2 glutathione + H2O2 = glutathione disulfide + 2 H2O. Its function is as follows. Protects cells and enzymes from oxidative damage, by catalyzing the reduction of hydrogen peroxide, lipid peroxides and organic hydroperoxide, by glutathione. May constitute a glutathione peroxidase-like protective system against peroxide damage in sperm membrane lipids. The sequence is that of Epididymal secretory glutathione peroxidase (Gpx5) from Mus musculus (Mouse).